Consider the following 156-residue polypeptide: Small ribosomal subunit protein uS7 (156 aa).

This sequence belongs to the universal ribosomal protein uS7 family. As to quaternary structure, part of the 30S ribosomal subunit. Contacts proteins S9 and S11.

One of the primary rRNA binding proteins, it binds directly to 16S rRNA where it nucleates assembly of the head domain of the 30S subunit. Is located at the subunit interface close to the decoding center, probably blocks exit of the E-site tRNA. This is Small ribosomal subunit protein uS7 from Brucella anthropi (strain ATCC 49188 / DSM 6882 / CCUG 24695 / JCM 21032 / LMG 3331 / NBRC 15819 / NCTC 12168 / Alc 37) (Ochrobactrum anthropi).